The chain runs to 501 residues: Glycerol kinase (501 aa).

An ADP-binding site is contributed by Thr16. Thr16, Thr17, and Ser18 together coordinate ATP. Thr16 serves as a coordination point for sn-glycerol 3-phosphate. An ADP-binding site is contributed by Arg20. Sn-glycerol 3-phosphate contacts are provided by Arg84, Glu85, Tyr135, and Asp242. Glycerol is bound by residues Arg84, Glu85, Tyr135, Asp242, and Gln243. Residues Thr264 and Gly307 each contribute to the ADP site. ATP is bound by residues Thr264, Gly307, Gln311, and Gly408. Gly408 contacts ADP.

Belongs to the FGGY kinase family.

It carries out the reaction glycerol + ATP = sn-glycerol 3-phosphate + ADP + H(+). Its pathway is polyol metabolism; glycerol degradation via glycerol kinase pathway; sn-glycerol 3-phosphate from glycerol: step 1/1. Its function is as follows. Key enzyme in the regulation of glycerol uptake and metabolism. Catalyzes the phosphorylation of glycerol to yield sn-glycerol 3-phosphate. In Saccharolobus islandicus (strain M.16.27) (Sulfolobus islandicus), this protein is Glycerol kinase.